The following is a 210-amino-acid chain: Protein-methionine-sulfoxide reductase heme-binding subunit MsrQ (210 aa).

A run of 6 helical transmembrane segments spans residues 8 to 28 (LAVF…AWIF), 37 to 57 (VLVE…MSMT), 75 to 95 (LGLW…LFIL), 110 to 130 (PYII…VTSN), 147 to 167 (LIYV…RADL), and 169 to 189 (EWAL…PMIT).

This sequence belongs to the MsrQ family. As to quaternary structure, heterodimer of a catalytic subunit (MsrP) and a heme-binding subunit (MsrQ). FMN serves as cofactor. Requires heme b as cofactor.

It localises to the cell inner membrane. Functionally, part of the MsrPQ system that repairs oxidized periplasmic proteins containing methionine sulfoxide residues (Met-O), using respiratory chain electrons. Thus protects these proteins from oxidative-stress damage caused by reactive species of oxygen and chlorine generated by the host defense mechanisms. MsrPQ is essential for the maintenance of envelope integrity under bleach stress, rescuing a wide series of structurally unrelated periplasmic proteins from methionine oxidation. MsrQ provides electrons for reduction to the reductase catalytic subunit MsrP, using the quinone pool of the respiratory chain. The protein is Protein-methionine-sulfoxide reductase heme-binding subunit MsrQ of Pseudomonas savastanoi pv. phaseolicola (strain 1448A / Race 6) (Pseudomonas syringae pv. phaseolicola (strain 1448A / Race 6)).